A 524-amino-acid polypeptide reads, in one-letter code: Bifunctional purine biosynthesis protein PurH (524 aa).

One can recognise an MGS-like domain in the interval 1-144 (MTRRALVSVS…KNSAHVGVVV (144 aa)).

The protein belongs to the PurH family.

The catalysed reaction is (6R)-10-formyltetrahydrofolate + 5-amino-1-(5-phospho-beta-D-ribosyl)imidazole-4-carboxamide = 5-formamido-1-(5-phospho-D-ribosyl)imidazole-4-carboxamide + (6S)-5,6,7,8-tetrahydrofolate. It carries out the reaction IMP + H2O = 5-formamido-1-(5-phospho-D-ribosyl)imidazole-4-carboxamide. Its pathway is purine metabolism; IMP biosynthesis via de novo pathway; 5-formamido-1-(5-phospho-D-ribosyl)imidazole-4-carboxamide from 5-amino-1-(5-phospho-D-ribosyl)imidazole-4-carboxamide (10-formyl THF route): step 1/1. It participates in purine metabolism; IMP biosynthesis via de novo pathway; IMP from 5-formamido-1-(5-phospho-D-ribosyl)imidazole-4-carboxamide: step 1/1. The chain is Bifunctional purine biosynthesis protein PurH from Anaeromyxobacter dehalogenans (strain 2CP-C).